A 273-amino-acid polypeptide reads, in one-letter code: NH(3)-dependent NAD(+) synthetase (273 aa).

Residue 47-54 (GISGGQDS) coordinates ATP. Residue D53 coordinates Mg(2+). R139 serves as a coordination point for deamido-NAD(+). An ATP-binding site is contributed by T159. E164 lines the Mg(2+) pocket. K172 and D179 together coordinate deamido-NAD(+). Residues K188 and T210 each contribute to the ATP site. Deamido-NAD(+) is bound at residue 259–260 (HK).

This sequence belongs to the NAD synthetase family. As to quaternary structure, homodimer.

The catalysed reaction is deamido-NAD(+) + NH4(+) + ATP = AMP + diphosphate + NAD(+) + H(+). It participates in cofactor biosynthesis; NAD(+) biosynthesis; NAD(+) from deamido-NAD(+) (ammonia route): step 1/1. Functionally, catalyzes the ATP-dependent amidation of deamido-NAD to form NAD. Uses ammonia as a nitrogen source. This chain is NH(3)-dependent NAD(+) synthetase, found in Staphylococcus aureus (strain bovine RF122 / ET3-1).